Consider the following 105-residue polypeptide: Small ribosomal subunit protein uS10 (105 aa).

It belongs to the universal ribosomal protein uS10 family. In terms of assembly, part of the 30S ribosomal subunit.

Involved in the binding of tRNA to the ribosomes. The chain is Small ribosomal subunit protein uS10 from Rickettsia conorii (strain ATCC VR-613 / Malish 7).